The following is a 367-amino-acid chain: MSSPPPARKGFYRQEVTKTAWEVRAVYQDLQPVGSGAYGAVCSAVDSRTGNKVAIKKLYRPFQSELFAKRAYRELRLLKHMRHENVIGLLDVFTPDESLDDFTDFYLVMPFMGTDLGKLMKHETLSEDRIQFLVYQMLKGLKYIHAAGVIHRDLKPGNLAVNEDCELKILDFGLARQADSEMTGYVVTRWYRAPEVILNWMRYTQTVDIWSVGCIMAEMITGKILFKGNDHLDQLKEIMKITGTPPPEFVQKLQSAEAKNYMEGLPELEKKDFASVLTNASPQAVNLLERMLVLDAEQRVTAAEALTHPYFESLRDTEDEPKAQKYDDSFDDVDRTLEEWKRVTYKEVLSFKPPRQLGARVPKETAL.

In terms of domain architecture, Protein kinase spans 27 to 311 (YQDLQPVGSG…AAEALTHPYF (285 aa)). Residues 33 to 41 (VGSGAYGAV) and Lys56 contribute to the ATP site. Residue Asp153 is the Proton acceptor of the active site. Thr183 carries the post-translational modification Phosphothreonine. The short motif at 183–185 (TGY) is the TXY element. Tyr185 carries the phosphotyrosine modification.

Belongs to the protein kinase superfamily. CMGC Ser/Thr protein kinase family. MAP kinase subfamily. In terms of assembly, monomer. Interacts with the PDZ domain of the syntrophin SNTA1. Interacts with SH3BP5, LIN7C, SCRIB and SYNJ2BP. Interacts with PTPN4; this interaction induces the activation of PTPN4 phosphatase activity. Mg(2+) serves as cofactor. Dually phosphorylated on Thr-183 and Tyr-185 by MAP2K3/MKK3 and MAP2K6/MKK6, which activates the enzyme. Post-translationally, ubiquitinated. Ubiquitination leads to degradation by the proteasome pathway. As to expression, highly expressed in skeletal muscle. Also expressed in the heart, particularly in cardiac myocytes, lung, thymus and testes.

Its subcellular location is the cytoplasm. The protein resides in the nucleus. The protein localises to the mitochondrion. The catalysed reaction is L-seryl-[protein] + ATP = O-phospho-L-seryl-[protein] + ADP + H(+). The enzyme catalyses L-threonyl-[protein] + ATP = O-phospho-L-threonyl-[protein] + ADP + H(+). With respect to regulation, activated by phosphorylation on threonine and tyrosine. MAP2K3/MKK3 and MAP2K6/MKK6 are both essential for the activation of MAPK12 induced by environmental stress, whereas MAP2K6/MKK6 is the major MAPK12 activator in response to TNF-alpha. Functionally, serine/threonine kinase which acts as an essential component of the MAP kinase signal transduction pathway. MAPK12 is one of the four p38 MAPKs which play an important role in the cascades of cellular responses evoked by extracellular stimuli such as pro-inflammatory cytokines or physical stress leading to direct activation of transcription factors such as ELK1 and ATF2. Accordingly, p38 MAPKs phosphorylate a broad range of proteins and it has been estimated that they may have approximately 200 to 300 substrates each. Some of the targets are downstream kinases such as MAPKAPK2, which are activated through phosphorylation and further phosphorylate additional targets. Plays a role in myoblast differentiation and also in the down-regulation of cyclin D1 in response to hypoxia in adrenal cells suggesting MAPK12 may inhibit cell proliferation while promoting differentiation. Phosphorylates DLG1. Following osmotic shock, MAPK12 in the cell nucleus increases its association with nuclear DLG1, thereby causing dissociation of DLG1-SFPQ complexes. This function is independent of its catalytic activity and could affect mRNA processing and/or gene transcription to aid cell adaptation to osmolarity changes in the environment. Regulates UV-induced checkpoint signaling and repair of UV-induced DNA damage and G2 arrest after gamma-radiation exposure. MAPK12 is involved in the regulation of SLC2A1 expression and basal glucose uptake in L6 myotubes; and negatively regulates SLC2A4 expression and contraction-mediated glucose uptake in adult skeletal muscle. C-Jun (JUN) phosphorylation is stimulated by MAPK14 and inhibited by MAPK12, leading to a distinct AP-1 regulation. MAPK12 is required for the normal kinetochore localization of PLK1, prevents chromosomal instability and supports mitotic cell viability. MAPK12-signaling is also positively regulating the expansion of transient amplifying myogenic precursor cells during muscle growth and regeneration. In Mus musculus (Mouse), this protein is Mitogen-activated protein kinase 12 (Mapk12).